Reading from the N-terminus, the 399-residue chain is Lysosomal acid lipase/cholesteryl ester hydrolase (399 aa).

An N-terminal signal peptide occupies residues M1–T27. The propeptide at A28–K76 is removed in mature form. N-linked (GlcNAc...) asparagine glycans are attached at residues N36, N72, N101, and N161. Residues P80–G380 form the AB hydrolase-1 domain. Catalysis depends on S174, which acts as the Charge relay system. N-linked (GlcNAc...) asparagine glycosylation is found at N273 and N321. H374 functions as the Charge relay system in the catalytic mechanism.

Belongs to the AB hydrolase superfamily. Lipase family. Monomer. In terms of processing, glycosylation is not essential for catalytic activity. As to expression, most abundantly expressed in brain, lung, kidney and mammary gland, a moderate expression seen in placenta and expressed at low levels in the liver and heart.

The protein resides in the lysosome. The enzyme catalyses a sterol ester + H2O = a sterol + a fatty acid + H(+). It catalyses the reaction cholesteryl (9Z-octadecenoate) + H2O = cholesterol + (9Z)-octadecenoate + H(+). The catalysed reaction is a triacylglycerol + H2O = a 1,2-diacylglycerol + a fatty acid + H(+). It carries out the reaction 1,2-di-(9Z-octadecenoyl)-glycerol + (9Z)-octadecenoate + H(+) = 1,2,3-tri-(9Z-octadecenoyl)-glycerol + H2O. The enzyme catalyses a 1,2-diacylglycerol + H2O = a 1-acylglycerol + a fatty acid + H(+). It catalyses the reaction 1,2-di-(9Z-octadecenoyl)-glycerol + H2O = 1-(9Z-octadecenoyl)-glycerol + (9Z)-octadecenoate + H(+). The catalysed reaction is a 1,3-diacylglycerol + H2O = a 1-acylglycerol + a fatty acid + H(+). It carries out the reaction 1,3-di-(9Z-octadecenoyl)-glycerol + H2O = 1-(9Z-octadecenoyl)-glycerol + (9Z)-octadecenoate + H(+). Functionally, catalyzes the deacylation of cholesteryl ester core lipids of endocytosed low density lipoproteins to generate free fatty acids and cholesterol. Hydrolyzes triglycerides (1,2,3-triacylglycerol) and diglycerides (such as 1,2-diacylglycerol and 1,3-diacylglycerol) with preference for the acyl moieties at the sn-1 or sn-3 positions. The chain is Lysosomal acid lipase/cholesteryl ester hydrolase (LIPA) from Homo sapiens (Human).